The following is a 120-amino-acid chain: Small ribosomal subunit protein eS25 (120 aa).

Residues 1-32 (MPPKAGQTKKAKMEAANKGAKKTTKKWSKGQS) form a disordered region. Positions 19-28 (GAKKTTKKWS) are enriched in basic residues.

It belongs to the eukaryotic ribosomal protein eS25 family.

The chain is Small ribosomal subunit protein eS25 (RPS25) from Leishmania infantum.